Consider the following 247-residue polypeptide: ATP synthase subunit a, chloroplastic (247 aa).

5 helical membrane-spanning segments follow: residues 38-58, 95-115, 134-154, 199-219, and 220-240; these read QVLITSWVVIAILLGSATLAV, VPFIGTMFLFIFVSNWSGALL, INTTVALALLTSVAYFYAGLT, LVVVVLVSLVPSVVPIPVMFL, and GLFTSGIQALIFATLAAAYIG.

Belongs to the ATPase A chain family. In terms of assembly, F-type ATPases have 2 components, CF(1) - the catalytic core - and CF(0) - the membrane proton channel. CF(1) has five subunits: alpha(3), beta(3), gamma(1), delta(1), epsilon(1). CF(0) has four main subunits: a, b, b' and c.

It localises to the plastid. Its subcellular location is the chloroplast thylakoid membrane. Key component of the proton channel; it plays a direct role in the translocation of protons across the membrane. This Jasminum nudiflorum (Winter jasmine) protein is ATP synthase subunit a, chloroplastic.